The following is a 509-amino-acid chain: Coiled-coil domain-containing protein 181 (509 aa).

2 disordered regions span residues 1–122 (MDED…EDEE) and 237–369 (FLPP…EKKK). 2 stretches are compositionally biased toward basic and acidic residues: residues 22 to 33 (DLEWLINDKEKS) and 41 to 56 (ACKK…KENE). A compositionally biased stretch (polar residues) spans 60–69 (ELGQQLSDPD). Basic and acidic residues-rich tracts occupy residues 70–82 (NSPK…RRND) and 266–275 (IKKEESEAKG). Residues 319–333 (RIQSAGVSPVTSTYC) are compositionally biased toward polar residues. Coiled-coil stretches lie at residues 335 to 377 (SPRQ…VFKA) and 418 to 488 (LKKK…RSKQ). Residues 337 to 369 (RQKELQKQLERKREKLKREEEQRKLEEENEKKK) show a composition bias toward basic and acidic residues.

This sequence belongs to the CCDC181 family. Homodimer. Interacts with HOOK1. Interacts with HOOK2. Interacts with HOOK3. Predominantly expressed in testis. Expressed at lower level in brain, eye, trachea and lung. Barely expressed in tongue, heart, liver, kidney, spleen and muscle. Present at high level in elongating spermatids, whereas lower levels are observed in round spermatids (at protein level).

It is found in the cytoplasm. The protein resides in the cytoskeleton. The protein localises to the cell projection. Its subcellular location is the cilium. It localises to the flagellum. Microtubule-binding protein that localizes to the microtubular manchette of elongating spermatids. This is Coiled-coil domain-containing protein 181 from Mus musculus (Mouse).